A 232-amino-acid polypeptide reads, in one-letter code: Large ribosomal subunit protein uL1 (232 aa).

It belongs to the universal ribosomal protein uL1 family. In terms of assembly, part of the 50S ribosomal subunit.

Functionally, binds directly to 23S rRNA. The L1 stalk is quite mobile in the ribosome, and is involved in E site tRNA release. In terms of biological role, protein L1 is also a translational repressor protein, it controls the translation of the L11 operon by binding to its mRNA. This Cereibacter sphaeroides (strain ATCC 17029 / ATH 2.4.9) (Rhodobacter sphaeroides) protein is Large ribosomal subunit protein uL1.